A 131-amino-acid polypeptide reads, in one-letter code: Small ribosomal subunit protein uS8 (131 aa).

The protein belongs to the universal ribosomal protein uS8 family. In terms of assembly, part of the 30S ribosomal subunit. Contacts proteins S5 and S12.

Functionally, one of the primary rRNA binding proteins, it binds directly to 16S rRNA central domain where it helps coordinate assembly of the platform of the 30S subunit. The sequence is that of Small ribosomal subunit protein uS8 from Mycoplasmopsis agalactiae (strain NCTC 10123 / CIP 59.7 / PG2) (Mycoplasma agalactiae).